The chain runs to 295 residues: Polyisoprenoid diphosphate/phosphate phosphohydrolase PLPP6 (295 aa).

2 disordered regions span residues 1–39 (MPSPRRSMEGRPLGVSASSSSSSPGSPAHGGGGGGSRFE) and 61–90 (SESPVHRRGSFPLAAAGPSQSPAPPLPEED). At 1–132 (MPSPRRSMEG…ESSSWGSVRP (132 aa)) the chain is on the cytoplasmic side. The span at 16–27 (SASSSSSSPGSP) shows a compositional bias: low complexity. Serine 26, serine 36, and serine 70 each carry phosphoserine. A helical transmembrane segment spans residues 133-153 (LMKLLEISGHGIPWLLGTLYC). At 154–164 (LCRSDSWAGRE) the chain is on the lumenal side. A helical membrane pass occupies residues 165-185 (VLMNLLFALLLDLLLVALIKG). The interval 184–192 (KGLVRRRRP) is phosphatase sequence motif I. The Cytoplasmic segment spans residues 186 to 228 (LVRRRRPAHNQMDMFVTLSVDKYSFPSGHATRAALMSRFILNH). A phosphatase sequence motif II region spans residues 211 to 214 (PSGH). The Proton donors role is filled by histidine 214. The chain crosses the membrane as a helical span at residues 229–249 (LVLAIPLRVLVVLWAFVLGLS). The interval 249–260 (SRVMLGRHNVTD) is phosphatase sequence motif III. The Lumenal segment spans residues 250 to 260 (RVMLGRHNVTD). Histidine 256 acts as the Nucleophile in catalysis. A helical membrane pass occupies residues 261–281 (VAFGFFLGYMQYSIVDYCWLS). Residues 282-295 (PHNAPVLFLLWSQR) are Cytoplasmic-facing.

This sequence belongs to the PA-phosphatase related phosphoesterase family. In terms of processing, phosphorylation by PKC activates the phosphatase activity towards presqualene diphosphate. As to expression, widely expressed. Expressed in most organs, in particular gastrointestinal organs, spleen, placenta, kidney, thymus and brain.

Its subcellular location is the endoplasmic reticulum membrane. It is found in the nucleus envelope. The protein resides in the nucleus inner membrane. It carries out the reaction presqualene diphosphate + H2O = presqualene phosphate + phosphate + H(+). It catalyses the reaction presqualene phosphate + H2O = presqualene alcohol + phosphate. The enzyme catalyses (2E,6E)-farnesyl diphosphate + H2O = (2E,6E)-farnesyl phosphate + phosphate + H(+). The catalysed reaction is (2E,6E)-farnesyl phosphate + H2O = (2E,6E)-farnesol + phosphate. It carries out the reaction (2E,6E,10E)-geranylgeranyl diphosphate + H2O = (2E,6E,10E)-geranylgeranyl phosphate + phosphate + H(+). It catalyses the reaction (2E,6E,10E)-geranylgeranyl phosphate + H2O = (2E,6E,10E)-geranylgeraniol + phosphate. The enzyme catalyses (2E)-geranyl diphosphate + H2O = (2E)-geranyl phosphate + phosphate + H(+). The catalysed reaction is (2E)-geranyl phosphate + H2O = (2E)-geraniol + phosphate. It carries out the reaction 1,2-dihexadecanoyl-sn-glycero-3-phosphate + H2O = 1,2-dihexadecanoyl-sn-glycerol + phosphate. With respect to regulation, inhibited by propranolol. Not inhibited by N-ethylmaleimide or bromoenolactome. Its function is as follows. Magnesium-independent polyisoprenoid diphosphatase that catalyzes the sequential dephosphorylation of presqualene, farnesyl, geranyl and geranylgeranyl diphosphates. Functions in the innate immune response through the dephosphorylation of presqualene diphosphate which acts as a potent inhibitor of the signaling pathways contributing to polymorphonuclear neutrophils activation. May regulate the biosynthesis of cholesterol and related sterols by dephosphorylating presqualene and farnesyl diphosphate, two key intermediates in this biosynthetic pathway. May also play a role in protein prenylation by acting on farnesyl diphosphate and its derivative geranylgeranyl diphosphate, two precursors for the addition of isoprenoid anchors to membrane proteins. Has a lower activity towards phosphatidic acid (PA), but through phosphatidic acid dephosphorylation may participate in the biosynthesis of phospholipids and triacylglycerols. May also act on ceramide-1-P, lysophosphatidic acid (LPA) and sphing-4-enine 1-phosphate/sphingosine-1-phosphate. This is Polyisoprenoid diphosphate/phosphate phosphohydrolase PLPP6 from Homo sapiens (Human).